Consider the following 370-residue polypeptide: Psilocybin cluster transcription regulator (370 aa).

Disordered regions lie at residues Met-1–Ser-39 and Tyr-102–Arg-221. The segment covering Ile-143–Gly-152 has biased composition (polar residues). Positions Thr-183 to Ser-202 are enriched in low complexity. The span at Glu-204–Arg-218 shows a compositional bias: basic and acidic residues. The basic motif stretch occupies residues Gln-208–Arg-221. A bHLH domain is found at Gln-208–Leu-258. The helix-loop-helix motif stretch occupies residues Gly-222 to Leu-258. The interval Val-317 to Glu-370 is disordered. The span at Glu-359–Glu-370 shows a compositional bias: basic and acidic residues.

The protein localises to the nucleus. Functionally, transcription factor that may regulate the expression of the gene cluster that mediates the biosynthesis of psilocybin, a psychotropic tryptamine-derived natural product. The polypeptide is Psilocybin cluster transcription regulator (Psilocybe cyanescens).